The following is a 141-amino-acid chain: Protein X (141 aa).

The tract at residues 25–52 (SSGPSFPRPAAGSAASSASSPSPSDDSD) is disordered. The tract at residues 68–113 (PCCLVFTCADLRTMDSTVNFVSWHANRQLGMPSKDLWTPYIKDQLL) is mitochondrial targeting sequence.

It belongs to the orthohepadnavirus protein X family. As to quaternary structure, may form homodimer. May interact with host CEBPA, CFLAR, CREB1, DDB1, E4F1, HBXIP, HSPD1/HSP60, NFKBIA, POLR2E and SMAD4. Interacts with host SMC5-SMC6 complex and induces its degradation. Interacts with host TRPC4AP; leading to prevent ubiquitination of TRPC4AP. Interacts with host PLSCR1; this interaction promotes ubiquitination and degradation of HBx and impairs HBx-mediated cell proliferation. In terms of processing, a fraction may be phosphorylated in insect cells and HepG2 cells, a human hepatoblastoma cell line. Phosphorylated in vitro by host protein kinase C or mitogen-activated protein kinase. N-acetylated in insect cells.

It localises to the host cytoplasm. The protein localises to the host nucleus. The protein resides in the host mitochondrion. In terms of biological role, multifunctional protein that plays a role in silencing host antiviral defenses and promoting viral transcription. Does not seem to be essential for HBV infection. May be directly involved in development of cirrhosis and liver cancer (hepatocellular carcinoma). Most of cytosolic activities involve modulation of cytosolic calcium. The effect on apoptosis is controversial depending on the cell types in which the studies have been conducted. May induce apoptosis by localizing in mitochondria and causing loss of mitochondrial membrane potential. May also modulate apoptosis by binding host CFLAR, a key regulator of the death-inducing signaling complex (DISC). Promotes viral transcription by using the host E3 ubiquitin ligase DDB1 to target the SMC5-SMC6 complex to proteasomal degradation. This host complex would otherwise bind to viral episomal DNA, and prevents its transcription. Moderately stimulates transcription of many different viral and cellular transcription elements. Promoters and enhancers stimulated by HBx contain DNA binding sites for NF-kappa-B, AP-1, AP-2, c-EBP, ATF/CREB, or the calcium-activated factor NF-AT. The sequence is that of Protein X from Woodchuck hepatitis B virus (isolate 2) (WHV).